An 839-amino-acid chain; its full sequence is Probable inorganic carbon transporter subunit DabA (839 aa).

Cys353, Asp355, His537, and Cys552 together coordinate Zn(2+).

This sequence belongs to the inorganic carbon transporter (TC 9.A.2) DabA family. Forms a complex with DabB. It depends on Zn(2+) as a cofactor.

It is found in the cell membrane. Part of an energy-coupled inorganic carbon pump. This chain is Probable inorganic carbon transporter subunit DabA, found in Chloroflexus aggregans (strain MD-66 / DSM 9485).